A 602-amino-acid polypeptide reads, in one-letter code: MSGPRSGSGSDGSTGRPGDAESRRSAYEKETHELTTQVAFLEEEVAMLRRKLSESPRQLRVLEERLAEIQAELSAVTGQNDRLVATLREARDQIVTLKEEVDRLAQPPSGYGIFVSSYEDGTVDVFTQGRKLRVTVSPSVNISDLLPGQEVMLNEALNVVETRAFERQGEIVLLKEVLEGGDRALVLGHTDEERVVMLAQPLLDGPIRSGDSLLIESRSGYAFERIPKSEVEELVLEEVPDIGYEQIGGLKSQIESIRDSVELPFLYKELYREHQLKPPKGVLLYGPPGCGKTLIAKAVANSLAKKVEAKTGGQGTGRAFFLNIKGPELLNKFVGETERQIRLVFQRAREKASEGMPVIVFFDEMDSIFRTRGSGVSSDVENTIVPQLLSEIDGVEQLENVIVIGASNREDMIDPAILRPGRLDVKIKVERPDAEAARDIFAKYVVPELPLYPDDLAEFGGNREATVQAMIQRVVERMYAESEENRFLEVTYANGDKEVLYFKDFNSGAMIENIVARAKKMAVKEHIEGGQKGLRMQYLLAACMDEFKENEDLPNTTNPDDWARISGKKGERIVYIRTLVTGTKGTEAGRSIDTIANTGQYL.

Over residues 1-17 the composition is skewed to low complexity; that stretch reads MSGPRSGSGSDGSTGRP. The disordered stretch occupies residues 1–31; the sequence is MSGPRSGSGSDGSTGRPGDAESRRSAYEKET. Over residues 18-31 the composition is skewed to basic and acidic residues; the sequence is GDAESRRSAYEKET. A coiled-coil region spans residues 19 to 106; that stretch reads DAESRRSAYE…LKEEVDRLAQ (88 aa). 289–294 provides a ligand contact to ATP; that stretch reads GCGKTL. The tract at residues 601 to 602 is docks into pockets in the proteasome alpha-ring; sequence YL.

The protein belongs to the AAA ATPase family. In terms of assembly, homohexamer. Assembles into a hexameric ring structure that caps the 20S proteasome core. Strongly interacts with the prokaryotic ubiquitin-like protein Pup through a hydrophobic interface; the interacting region of ARC lies in its N-terminal coiled-coil domain. There is one Pup binding site per ARC hexamer ring. Upon ATP-binding, the C-terminus of ARC interacts with the alpha-rings of the proteasome core, possibly by binding to the intersubunit pockets.

It participates in protein degradation; proteasomal Pup-dependent pathway. ATPase which is responsible for recognizing, binding, unfolding and translocation of pupylated proteins into the bacterial 20S proteasome core particle. May be essential for opening the gate of the 20S proteasome via an interaction with its C-terminus, thereby allowing substrate entry and access to the site of proteolysis. Thus, the C-termini of the proteasomal ATPase may function like a 'key in a lock' to induce gate opening and therefore regulate proteolysis. The polypeptide is Proteasome-associated ATPase (Frankia casuarinae (strain DSM 45818 / CECT 9043 / HFP020203 / CcI3)).